Here is a 208-residue protein sequence, read N- to C-terminus: Transmembrane protein 17 (208 aa).

The next 4 membrane-spanning stretches (helical) occupy residues 46-66, 79-99, 111-131, and 143-163; these read MSLY…VFML, FILV…LYLG, LAGF…FLLF, and SVNI…FVTL.

This sequence belongs to the TMEM17 family. In terms of assembly, part of the tectonic-like complex (also named B9 complex).

The protein localises to the cell projection. Its subcellular location is the cilium membrane. Functionally, transmembrane component of the tectonic-like complex, a complex localized at the transition zone of primary cilia and acting as a barrier that prevents diffusion of transmembrane proteins between the cilia and plasma membranes. Required for ciliogenesis and sonic hedgehog/SHH signaling. This is Transmembrane protein 17 (TMEM17) from Gallus gallus (Chicken).